A 232-amino-acid chain; its full sequence is Orotidine 5'-phosphate decarboxylase (232 aa).

Residues Asp-11, Lys-33, 60-69, Thr-119, Arg-180, Gln-189, Gly-209, and Arg-210 each bind substrate; that span reads DLKFHDIPHT. The Proton donor role is filled by Lys-62.

This sequence belongs to the OMP decarboxylase family. Type 1 subfamily. Homodimer.

The enzyme catalyses orotidine 5'-phosphate + H(+) = UMP + CO2. Its pathway is pyrimidine metabolism; UMP biosynthesis via de novo pathway; UMP from orotate: step 2/2. Its function is as follows. Catalyzes the decarboxylation of orotidine 5'-monophosphate (OMP) to uridine 5'-monophosphate (UMP). The sequence is that of Orotidine 5'-phosphate decarboxylase from Nitrosococcus oceani (strain ATCC 19707 / BCRC 17464 / JCM 30415 / NCIMB 11848 / C-107).